Here is a 44-residue protein sequence, read N- to C-terminus: Antibacterial protein 2 homolog (44 aa).

It belongs to the staphylococcal hemolytic protein family.

The protein localises to the secreted. Its function is as follows. Has hemolytic activity and also inhibits the growth of gonococci. The polypeptide is Antibacterial protein 2 homolog (Staphylococcus haemolyticus (strain JCSC1435)).